Consider the following 867-residue polypeptide: Programmed cell death 6-interacting protein (867 aa).

The region spanning 3-391 is the BRO1 domain; sequence TFISVPLKKT…AQMRDATIFA (389 aa). Disordered regions lie at residues 714–809 and 835–867; these read REPS…PYPS and IPPYMYQPPSGQPPYPAQQPSFSYPQQPFFPPQ. Residues 729-744 are compositionally biased toward low complexity; it reads SAPSSISTNIATSSIP. Over residues 756–766 the composition is skewed to pro residues; the sequence is QPPPRPPPPAM. A compositionally biased stretch (low complexity) spans 767–791; sequence PSASPVPASAAQASNPAPTAAADSS. Over residues 792–803 the composition is skewed to polar residues; it reads QPPSNTIPSQAQ. Residues 852–861 show a composition bias toward low complexity; sequence QQPSFSYPQQ.

Phosphorylated on tyrosine residues.

The protein localises to the cytoplasm. Its subcellular location is the cytosol. It localises to the melanosome. It is found in the cytoskeleton. The protein resides in the microtubule organizing center. The protein localises to the centrosome. Its subcellular location is the secreted. It localises to the extracellular exosome. It is found in the cell junction. The protein resides in the tight junction. The protein localises to the midbody. Its subcellular location is the midbody ring. Functionally, multifunctional protein that may be involved in endocytosis, multivesicular body biogenesis, membrane repair, cytokinesis, apoptosis and maintenance of tight junction integrity. Class E VPS protein involved in concentration and sorting of cargo proteins of the multivesicular body (MVB) for incorporation into intralumenal vesicles that are generated by invagination and scission from the limiting membrane of the endosome. Binds to the phospholipid lysobisphosphatidic acid (LBPA) which is abundant in MVBs internal membranes. May play a role in the regulation of both apoptosis and cell proliferation. Regulates exosome biogenesis in concert with SDC1/4 and SDCBP. Ensures the proper assembly and positioning of actomyosin-tight junction complex at the apical sides of adjacent epithelial cells that defines a spatial membrane domain essential for the maintenance of epithelial cell polarity and barrier. The polypeptide is Programmed cell death 6-interacting protein (pdcd6ip) (Xenopus laevis (African clawed frog)).